Here is a 442-residue protein sequence, read N- to C-terminus: Pyruvate dehydrogenase complex protein X component, mitochondrial (442 aa).

The transit peptide at 1 to 35 (MASLAAACRVSARLAARKLQHDAAVRGFRSSAAAL) directs the protein to the mitochondrion. The region spanning 37–113 (AQNFMMPALS…QVGTRIAVVA (77 aa)) is the Lipoyl-binding domain. N6-lipoyllysine is present on K78. Residues 119 to 169 (ITKLEIPPDEGPQQLKAAAPAPAPTPAPAPASPQPQFAAPTPSPPKASTKV) are disordered. Pro residues predominate over residues 139-151 (APAPTPAPAPASP). Positions 152–169 (QPQFAAPTPSPPKASTKV) are enriched in low complexity. Residues 175–215 (PLLPSVHQLIKENGLDESAVSNITPTGPGGRILKGDVLAYL) enclose the Peripheral subunit-binding (PSBD) domain. The interval 244–269 (AKPVEPEKPQEEKASAPAPAPRAPEP) is disordered. Residues 245–257 (KPVEPEKPQEEKA) show a composition bias toward basic and acidic residues. The interaction to the E2 core stretch occupies residues 317–336 (PLPTNYQPTADELFDQVLGL).

It belongs to the 2-oxoacid dehydrogenase family. As to quaternary structure, eukaryotic pyruvate dehydrogenase (PDH) complexes are organized as a core consisting of the oligomeric dihydrolipoamide acetyl-transferase (E2), around which are arranged multiple copies of pyruvate dehydrogenase (E1), dihydrolipoamide dehydrogenase (E3) and protein X (E3BP) bound by non-covalent bonds. The Chaetomium thermophilum PDH complex contains 60 E2 units, 12 E3BP units, about 20 E1 units, and 12 or more E3 units. The units are organized in 1 E2 60-mer, 4 E3BP trimers, about 20 E1 tetramers, and a maximum of 12 E3 dimers. The E3BP trimers are bound inside the icosahedral core with tetrahedral symmetry.

It localises to the mitochondrion. Functionally, the 10-megadalton pyruvate dehydrogenase complex contains multiple copies of three enzymatic components: pyruvate dehydrogenase (E1), dihydrolipoamide acetyltransferase (E2) and lipoamide dehydrogenase (E3) and catalyzes the overall oxidative decarboxylation of pyruvate to form acetyl-CoA and CO(2). E3BP is responsible for tethering E3 in proximity to the core, forming the entire metabolon, and the number of E3s is limited by the number of E3BPs. Within the complex, pyruvate and thiamine pyrophosphate (TPP or vitamin B1) are bound by pyruvate dehydrogenase E1 subunits alpha and beta and pyruvate is decarboxylated leading to the 2-carbon hydrohyethyl bound to TPP. The E2 component contains covalently-bound lipoyl cofactors and transfers the hydroxyethyl group from TPP to an oxidized form of covalently bound lipoamide, and the resulting acetyl group is then transferred to free coenzyme A to form acetyl-CoA and reduced dihydrolipoamide-E2. Finally, the flavoprotein dihydrolipoamide dehydrogenase (E3) re-oxidizes the lipoyl group of dihydrolipoamide-E2 to form lipoamide-E2 and NADH. A fourth subunit, E3BP, is responsible for tethering E3 in proximity to the core, forming the entire metabolon. The protein is Pyruvate dehydrogenase complex protein X component, mitochondrial of Chaetomium thermophilum (strain DSM 1495 / CBS 144.50 / IMI 039719) (Thermochaetoides thermophila).